The following is a 507-amino-acid chain: ATP synthase subunit alpha, chloroplastic (507 aa).

170 to 177 provides a ligand contact to ATP; that stretch reads GDRQTGKT.

It belongs to the ATPase alpha/beta chains family. In terms of assembly, F-type ATPases have 2 components, CF(1) - the catalytic core - and CF(0) - the membrane proton channel. CF(1) has five subunits: alpha(3), beta(3), gamma(1), delta(1), epsilon(1). CF(0) has four main subunits: a, b, b' and c.

It localises to the plastid. The protein localises to the chloroplast thylakoid membrane. The catalysed reaction is ATP + H2O + 4 H(+)(in) = ADP + phosphate + 5 H(+)(out). Produces ATP from ADP in the presence of a proton gradient across the membrane. The alpha chain is a regulatory subunit. The polypeptide is ATP synthase subunit alpha, chloroplastic (Nicotiana tabacum (Common tobacco)).